Reading from the N-terminus, the 144-residue chain is Large ribosomal subunit protein uL11 (144 aa).

The protein belongs to the universal ribosomal protein uL11 family. As to quaternary structure, part of the ribosomal stalk of the 50S ribosomal subunit. Interacts with L10 and the large rRNA to form the base of the stalk. L10 forms an elongated spine to which L12 dimers bind in a sequential fashion forming a multimeric L10(L12)X complex. One or more lysine residues are methylated.

Forms part of the ribosomal stalk which helps the ribosome interact with GTP-bound translation factors. In Rickettsia bellii (strain OSU 85-389), this protein is Large ribosomal subunit protein uL11.